Reading from the N-terminus, the 138-residue chain is Large ribosomal subunit protein uL16 (138 aa).

Over residues 1-17 (MLIPRRVKHRKQHHPTR) the composition is skewed to basic residues. The tract at residues 1 to 24 (MLIPRRVKHRKQHHPTRRGAASGG) is disordered.

The protein belongs to the universal ribosomal protein uL16 family. As to quaternary structure, part of the 50S ribosomal subunit.

Binds 23S rRNA and is also seen to make contacts with the A and possibly P site tRNAs. In Kineococcus radiotolerans (strain ATCC BAA-149 / DSM 14245 / SRS30216), this protein is Large ribosomal subunit protein uL16.